The sequence spans 80 residues: Acyl carrier protein (80 aa).

One can recognise a Carrier domain in the interval 1–79 (MSQEEILQKV…DAVKFIEAKK (79 aa)). Ser39 carries the O-(pantetheine 4'-phosphoryl)serine modification.

This sequence belongs to the acyl carrier protein (ACP) family. In terms of processing, 4'-phosphopantetheine is transferred from CoA to a specific serine of apo-ACP by AcpS. This modification is essential for activity because fatty acids are bound in thioester linkage to the sulfhydryl of the prosthetic group.

The protein localises to the cytoplasm. The protein operates within lipid metabolism; fatty acid biosynthesis. In terms of biological role, carrier of the growing fatty acid chain in fatty acid biosynthesis. The polypeptide is Acyl carrier protein (Prochlorococcus marinus (strain MIT 9515)).